Consider the following 281-residue polypeptide: 4-hydroxy-3-methylbut-2-enyl diphosphate reductase (281 aa).

[4Fe-4S] cluster is bound at residue Cys12. (2E)-4-hydroxy-3-methylbut-2-enyl diphosphate-binding residues include His41 and His74. His41 and His74 together coordinate dimethylallyl diphosphate. Isopentenyl diphosphate-binding residues include His41 and His74. Cys96 serves as a coordination point for [4Fe-4S] cluster. Residue His124 participates in (2E)-4-hydroxy-3-methylbut-2-enyl diphosphate binding. His124 is a binding site for dimethylallyl diphosphate. His124 is an isopentenyl diphosphate binding site. Residue Glu126 is the Proton donor of the active site. Thr164 is a binding site for (2E)-4-hydroxy-3-methylbut-2-enyl diphosphate. A [4Fe-4S] cluster-binding site is contributed by Cys193. Residues Ser221, Asn223, and Ser265 each contribute to the (2E)-4-hydroxy-3-methylbut-2-enyl diphosphate site. Positions 221, 223, and 265 each coordinate dimethylallyl diphosphate. Isopentenyl diphosphate contacts are provided by Ser221, Asn223, and Ser265.

The protein belongs to the IspH family. [4Fe-4S] cluster serves as cofactor.

The catalysed reaction is isopentenyl diphosphate + 2 oxidized [2Fe-2S]-[ferredoxin] + H2O = (2E)-4-hydroxy-3-methylbut-2-enyl diphosphate + 2 reduced [2Fe-2S]-[ferredoxin] + 2 H(+). The enzyme catalyses dimethylallyl diphosphate + 2 oxidized [2Fe-2S]-[ferredoxin] + H2O = (2E)-4-hydroxy-3-methylbut-2-enyl diphosphate + 2 reduced [2Fe-2S]-[ferredoxin] + 2 H(+). The protein operates within isoprenoid biosynthesis; dimethylallyl diphosphate biosynthesis; dimethylallyl diphosphate from (2E)-4-hydroxy-3-methylbutenyl diphosphate: step 1/1. It functions in the pathway isoprenoid biosynthesis; isopentenyl diphosphate biosynthesis via DXP pathway; isopentenyl diphosphate from 1-deoxy-D-xylulose 5-phosphate: step 6/6. Its function is as follows. Catalyzes the conversion of 1-hydroxy-2-methyl-2-(E)-butenyl 4-diphosphate (HMBPP) into a mixture of isopentenyl diphosphate (IPP) and dimethylallyl diphosphate (DMAPP). Acts in the terminal step of the DOXP/MEP pathway for isoprenoid precursor biosynthesis. The chain is 4-hydroxy-3-methylbut-2-enyl diphosphate reductase from Nitratidesulfovibrio vulgaris (strain DSM 19637 / Miyazaki F) (Desulfovibrio vulgaris).